The chain runs to 336 residues: Probable ADP-ribosylation factor GTPase-activating protein AGD13 (336 aa).

The Arf-GAP domain maps to 15–137 (KRRIRDLLNQ…EFLKPSLRIT (123 aa)). The C4-type zinc-finger motif lies at 30–53 (CADCGASDPKWASANIGVFICLKC). The region spanning 162–280 (RTNSSSQTMF…AMAFGDPEMF (119 aa)) is the C2 domain. Asp249, Ser252, and Asp255 together coordinate Ca(2+).

Requires Ca(2+) as cofactor.

Functionally, GTPase-activating protein (GAP) for ADP ribosylation factor (ARF). This is Probable ADP-ribosylation factor GTPase-activating protein AGD13 (AGD13) from Arabidopsis thaliana (Mouse-ear cress).